We begin with the raw amino-acid sequence, 315 residues long: Replication factor C small subunit (315 aa).

Residue 43-50 participates in ATP binding; it reads GSPGVGKT.

This sequence belongs to the activator 1 small subunits family. RfcS subfamily. As to quaternary structure, heteromultimer composed of small subunits (RfcS) and large subunits (RfcL).

Part of the RFC clamp loader complex which loads the PCNA sliding clamp onto DNA. The sequence is that of Replication factor C small subunit from Methanococcus vannielii (strain ATCC 35089 / DSM 1224 / JCM 13029 / OCM 148 / SB).